The sequence spans 326 residues: Beta-ketoacyl-[acyl-carrier-protein] synthase III (326 aa).

Catalysis depends on residues Cys120 and His253. The tract at residues 254–258 (QANIR) is ACP-binding. Residue Asn283 is part of the active site.

It belongs to the thiolase-like superfamily. FabH family. In terms of assembly, homodimer.

It is found in the cytoplasm. The catalysed reaction is malonyl-[ACP] + acetyl-CoA + H(+) = 3-oxobutanoyl-[ACP] + CO2 + CoA. Its pathway is lipid metabolism; fatty acid biosynthesis. In terms of biological role, catalyzes the condensation reaction of fatty acid synthesis by the addition to an acyl acceptor of two carbons from malonyl-ACP. Catalyzes the first condensation reaction which initiates fatty acid synthesis and may therefore play a role in governing the total rate of fatty acid production. Possesses both acetoacetyl-ACP synthase and acetyl transacylase activities. Its substrate specificity determines the biosynthesis of branched-chain and/or straight-chain of fatty acids. This chain is Beta-ketoacyl-[acyl-carrier-protein] synthase III, found in Cupriavidus pinatubonensis (strain JMP 134 / LMG 1197) (Cupriavidus necator (strain JMP 134)).